The sequence spans 516 residues: Tyrosine decarboxylase 3 (516 aa).

Lys319 is modified (N6-(pyridoxal phosphate)lysine).

This sequence belongs to the group II decarboxylase family. As to quaternary structure, homodimer. It depends on pyridoxal 5'-phosphate as a cofactor.

It carries out the reaction L-tyrosine + H(+) = tyramine + CO2. The protein is Tyrosine decarboxylase 3 (TYRDC-3) of Petroselinum crispum (Parsley).